The following is a 118-amino-acid chain: Small ribosomal subunit protein uS13 (118 aa).

The interval 92 to 118 (KKHLPVRGQRTKTNARTRKGPRKPIKK) is disordered.

Belongs to the universal ribosomal protein uS13 family. As to quaternary structure, part of the 30S ribosomal subunit. Forms a loose heterodimer with protein S19. Forms two bridges to the 50S subunit in the 70S ribosome.

Its function is as follows. Located at the top of the head of the 30S subunit, it contacts several helices of the 16S rRNA. In the 70S ribosome it contacts the 23S rRNA (bridge B1a) and protein L5 of the 50S subunit (bridge B1b), connecting the 2 subunits; these bridges are implicated in subunit movement. Contacts the tRNAs in the A and P-sites. This chain is Small ribosomal subunit protein uS13, found in Wigglesworthia glossinidia brevipalpis.